Here is a 400-residue protein sequence, read N- to C-terminus: Tryptophan--tRNA ligase (400 aa).

A 'HIGH' region motif is present at residues 12 to 20 (PTGALHLGH). The insert stretch occupies residues 173–241 (REPGFEQKAL…RLFGYLEGAR (69 aa)). The short motif at 265 to 269 (KMSKS) is the 'KMSKS' region element. Lysine 268 is a binding site for ATP. The interval 280 to 305 (KASVEKKVRTMPTDPARVRRTDPGDP) is disordered. Residues 295–304 (ARVRRTDPGD) show a composition bias toward basic and acidic residues.

The protein belongs to the class-I aminoacyl-tRNA synthetase family. As to quaternary structure, homodimer.

The protein resides in the cytoplasm. The enzyme catalyses tRNA(Trp) + L-tryptophan + ATP = L-tryptophyl-tRNA(Trp) + AMP + diphosphate + H(+). The protein is Tryptophan--tRNA ligase (trpS) of Ralstonia nicotianae (strain ATCC BAA-1114 / GMI1000) (Ralstonia solanacearum).